A 465-amino-acid polypeptide reads, in one-letter code: Chromosomal replication initiator protein DnaA (465 aa).

The tract at residues 1–80 (MLWTDCLTRL…VEILVDSRPG (80 aa)) is domain I, interacts with DnaA modulators. Positions 80 to 127 (GAILSPAEQPATTTAALSSTPVVPQRVKKEVVEPAATQSNKILNSKKR) are domain II. Positions 128-345 (LLNPLFTFSL…GALNKVVAIA (218 aa)) are domain III, AAA+ region. Positions 173, 175, 176, and 177 each coordinate ATP. The interval 346 to 465 (RFKGSQIDLD…YKNLLRLLQS (120 aa)) is domain IV, binds dsDNA.

The protein belongs to the DnaA family. In terms of assembly, oligomerizes as a right-handed, spiral filament on DNA at oriC.

It localises to the cytoplasm. In terms of biological role, plays an essential role in the initiation and regulation of chromosomal replication. ATP-DnaA binds to the origin of replication (oriC) to initiate formation of the DNA replication initiation complex once per cell cycle. Binds the DnaA box (a 9 base pair repeat at the origin) and separates the double-stranded (ds)DNA. Forms a right-handed helical filament on oriC DNA; dsDNA binds to the exterior of the filament while single-stranded (ss)DNA is stabiized in the filament's interior. The ATP-DnaA-oriC complex binds and stabilizes one strand of the AT-rich DNA unwinding element (DUE), permitting loading of DNA polymerase. After initiation quickly degrades to an ADP-DnaA complex that is not apt for DNA replication. Binds acidic phospholipids. This chain is Chromosomal replication initiator protein DnaA, found in Acinetobacter baylyi (strain ATCC 33305 / BD413 / ADP1).